A 208-amino-acid chain; its full sequence is MIGLVGRKVGMTRIFNEDGVSIPVTVIEIEANRVTQVKTLENDGYTAVQVTTGSKKASRVTKPEAGHFVKAGVEAGRGLWEFRTEGEEFTLGQEINVDIFTDVKKVDVTGTSKGKGFQGGVKRWNFRTQDATHGNSLSHRVLGSIGQNQTPGRVFKGKKMAGHLGAERVTVQSLEVVRVDAERKLLLVKGSVPGATNSDVIVKPAVKA.

Residue Q149 is modified to N5-methylglutamine.

This sequence belongs to the universal ribosomal protein uL3 family. As to quaternary structure, part of the 50S ribosomal subunit. Forms a cluster with proteins L14 and L19. In terms of processing, methylated by PrmB.

One of the primary rRNA binding proteins, it binds directly near the 3'-end of the 23S rRNA, where it nucleates assembly of the 50S subunit. The chain is Large ribosomal subunit protein uL3 from Glaesserella parasuis serovar 5 (strain SH0165) (Haemophilus parasuis).